An 873-amino-acid chain; its full sequence is Probable beta-glucosidase A (873 aa).

A signal peptide spans 1 to 19 (MRFGWLEVAALTAASVANA). 3 N-linked (GlcNAc...) asparagine glycosylation sites follow: asparagine 71, asparagine 222, and asparagine 263. Aspartate 291 is an active-site residue. Asparagine 326, asparagine 333, asparagine 365, asparagine 453, asparagine 534, asparagine 553, asparagine 575, asparagine 679, and asparagine 725 each carry an N-linked (GlcNAc...) asparagine glycan. The disordered stretch occupies residues 731 to 764 (DSSDDPNYGWEDSEYIPEGARDGSPQPLLKAGGA).

Belongs to the glycosyl hydrolase 3 family.

It localises to the secreted. It carries out the reaction Hydrolysis of terminal, non-reducing beta-D-glucosyl residues with release of beta-D-glucose.. It functions in the pathway glycan metabolism; cellulose degradation. Beta-glucosidases are one of a number of cellulolytic enzymes involved in the degradation of cellulosic biomass. Catalyzes the last step releasing glucose from the inhibitory cellobiose. The protein is Probable beta-glucosidase A (bglA) of Aspergillus fumigatus (strain CBS 144.89 / FGSC A1163 / CEA10) (Neosartorya fumigata).